We begin with the raw amino-acid sequence, 448 residues long: MSQPIQYLDVSENIPCSRCKTETAILISRKEKFCKDCFVRFIRGKQRKQMQDEKYKVKYGKNEENSPVQKVLLTLSCGVSSLVLVDVMTSLLKEQFDMHKGKQGFELVLLNINEYELKALDRSVKDVLEQLVQRFKPINITYKILSLESYVLDQSLLEKIVLNGDFTAYSQSIHHDRDYTLSEVLDLCPNKSSLEDLLTIIYDELILRTACLESCETILYGHSMTRIANEIIALTVKGRGSSIYQTVSDHSVNFRNKDYKIIFPLRDVLFAEILAYSKLSELDTFAVESTKPVSKITKNMTIRDLTTNYFNQLDATGYASTASTVVKTGDKLGAPKFEEDSSICQVCGTEIHQDPKEWLRRITVNKAAPLETEEEKEYAEQYKKASSLIEEPSSTQSKTPINICYGCTVTISGIKNESGFIWPIKYPANDEEREILNEYILTDDEDDQ.

The protein belongs to the CTU2/NCS2 family.

Its subcellular location is the cytoplasm. The protein operates within tRNA modification; 5-methoxycarbonylmethyl-2-thiouridine-tRNA biosynthesis. In terms of biological role, plays a central role in 2-thiolation of mcm(5)S(2)U at tRNA wobble positions of tRNA(Lys), tRNA(Glu) and tRNA(Gln). May act by forming a heterodimer with NCS6 that ligates sulfur from thiocarboxylated URM1 onto the uridine of tRNAs at wobble position. Prior mcm(5) tRNA modification by the elongator complex is required for 2-thiolation. May also be involved in protein urmylation. In Debaryomyces hansenii (strain ATCC 36239 / CBS 767 / BCRC 21394 / JCM 1990 / NBRC 0083 / IGC 2968) (Yeast), this protein is Cytoplasmic tRNA 2-thiolation protein 2.